A 404-amino-acid polypeptide reads, in one-letter code: Glutamate-pyruvate aminotransferase AlaA (404 aa).

Gly-41 and Asn-179 together coordinate L-alanine. Lys-240 carries the N6-(pyridoxal phosphate)lysine modification. Arg-378 lines the L-alanine pocket.

The protein belongs to the class-I pyridoxal-phosphate-dependent aminotransferase family. Homodimer. It depends on pyridoxal 5'-phosphate as a cofactor.

The enzyme catalyses L-alanine + 2-oxoglutarate = pyruvate + L-glutamate. It participates in amino-acid biosynthesis; L-alanine biosynthesis. Involved in the biosynthesis of alanine. Catalyzes the transamination of pyruvate by glutamate, leading to the formation of L-alanine and 2-oxoglutarate. Is also able to catalyze the reverse reaction. The sequence is that of Glutamate-pyruvate aminotransferase AlaA (alaA) from Haemophilus influenzae (strain ATCC 51907 / DSM 11121 / KW20 / Rd).